The sequence spans 308 residues: Alpha/beta hydrolase domain-containing protein WAV2 (308 aa).

The chain crosses the membrane as a helical span at residues 6–26; it reads SALFYGFGGIVVAGVALLVAF. Residues serine 159, aspartate 243, and arginine 308 each act as charge relay system in the active site.

The protein belongs to the serine esterase family. As to expression, expressed in roots, rosette leaves, stems and flowers.

The protein localises to the cell membrane. In terms of biological role, involved in the regulation of root growth. Involved in the suppression of the root bending in response to touch stimuli, gravity and light. Negatively regulates stimulus-induced root bending through inhibition of root tip rotation. In Arabidopsis thaliana (Mouse-ear cress), this protein is Alpha/beta hydrolase domain-containing protein WAV2.